Reading from the N-terminus, the 174-residue chain is Centrosomal protein 20 (174 aa).

Residues 1 to 104 form a necessary and sufficient for homooligomerization and localization to centrosomes and pericentriolar satellites region; sequence MATVTELKAV…AFEESKDNSI (104 aa). Residues 49–81 form the LisH domain; that stretch reads ENLLINELIREYLEFNKYKYTASVLIAESGQPV. Positions 136–174 are disordered; that stretch reads TKHLSWKPSRRPDDDHVRKDTGPRTTTEELPAAAQAVSR. Ser144 is modified (phosphoserine). The segment covering 145 to 157 has biased composition (basic and acidic residues); the sequence is RRPDDDHVRKDTG.

The protein belongs to the CEP43 family. Homooligomer; probably required for localization to centrosomes. Forms a complex with KIAA0753/OFIP and OFD1; within this complex may stabilize the interaction between OFD1 and KIAA0753/OFIP. Interacts with PCM1; this interaction may be mediated by KIAA0753/OFIP.

It is found in the cytoplasm. Its subcellular location is the cytoskeleton. It localises to the microtubule organizing center. The protein localises to the centrosome. The protein resides in the centriole. It is found in the cell projection. Its subcellular location is the cilium. It localises to the cilium basal body. The protein localises to the cytoplasmic granule. The protein resides in the centriolar satellite. Involved in the biogenesis of cilia. Required for the recruitment of PLK1 to centrosomes and S phase progression. The polypeptide is Centrosomal protein 20 (Mus musculus (Mouse)).